The sequence spans 722 residues: ORC ubiquitin ligase 1 (722 aa).

The segment at 18 to 56 adopts an RING-type; degenerate zinc-finger fold; it reads CHICLGKVRQPVVCTNNHVFCSICIDLWLKNNSQCPACR. Coiled coils occupy residues 87-129 and 157-267; these read LRKT…TILD and VVEW…KEDV. Serine 210 is modified (phosphoserine). The tract at residues 273–359 is disordered; it reads RAPSADSKGP…RLGARETPMD (87 aa). Low complexity predominate over residues 302-319; that stretch reads AGSASASHLASPSSSRLA. Residues 323–338 are compositionally biased toward polar residues; sequence SVRQESTSRTEPNCPQ. The segment covering 339-359 has biased composition (basic and acidic residues); the sequence is NKDRYPKPTEPRLGARETPMD. Serine 522, serine 549, serine 557, serine 564, and serine 566 each carry phosphoserine. Over residues 541-555 the composition is skewed to polar residues; that stretch reads MSESDNSKSPCNNGF. 2 disordered regions span residues 541–585 and 691–722; these read MSES…GSKL and VPEK…ATKS. Positions 571 to 581 are enriched in basic and acidic residues; sequence EFLEEPDKLQE. Residues 698–722 show a composition bias toward polar residues; sequence NGNQSTKRKIQSSLANASPSKATKS. Phosphoserine occurs at positions 715 and 717.

Associates with ORC complex. Binds to chromatin; association is cell cycle-regulated, absent from mitotic chromosomes, is associated with chromatin from G1 and partially released from chromatin from mid S-phase. In terms of processing, auto-ubiquitinated.

Its subcellular location is the chromosome. It carries out the reaction S-ubiquitinyl-[E2 ubiquitin-conjugating enzyme]-L-cysteine + [acceptor protein]-L-lysine = [E2 ubiquitin-conjugating enzyme]-L-cysteine + N(6)-ubiquitinyl-[acceptor protein]-L-lysine.. In terms of biological role, E3 ubiquitin ligase essential for DNA replication origin activation during S phase. Acts as a replication origin selector which selects the origins to be fired and catalyzes the multi-mono-ubiquitination of a subset of chromatin-bound ORC3 and ORC5 during S-phase. This is ORC ubiquitin ligase 1 from Mus musculus (Mouse).